A 378-amino-acid polypeptide reads, in one-letter code: UPF0284 protein MK0224 (378 aa).

Belongs to the UPF0284 family.

This chain is UPF0284 protein MK0224, found in Methanopyrus kandleri (strain AV19 / DSM 6324 / JCM 9639 / NBRC 100938).